Consider the following 994-residue polypeptide: Probable beta-galactosidase C (994 aa).

The signal sequence occupies residues 1–19; the sequence is MKLQSILSCWAILVAQIWA. Residue tyrosine 78 participates in substrate binding. Residue asparagine 88 is glycosylated (N-linked (GlcNAc...) asparagine). Residues asparagine 123, alanine 124, glutamate 125, and asparagine 183 each coordinate substrate. Glutamate 184 serves as the catalytic Proton donor. Substrate is bound at residue tyrosine 247. An intrachain disulfide couples cysteine 253 to cysteine 301. N-linked (GlcNAc...) asparagine glycosylation occurs at asparagine 272. Glutamate 283 (nucleophile) is an active-site residue. Tyrosine 350 serves as a coordination point for substrate. 14 N-linked (GlcNAc...) asparagine glycosylation sites follow: asparagine 388, asparagine 407, asparagine 433, asparagine 500, asparagine 514, asparagine 521, asparagine 584, asparagine 600, asparagine 674, asparagine 712, asparagine 717, asparagine 757, asparagine 861, and asparagine 969.

This sequence belongs to the glycosyl hydrolase 35 family.

It is found in the secreted. The catalysed reaction is Hydrolysis of terminal non-reducing beta-D-galactose residues in beta-D-galactosides.. In terms of biological role, cleaves beta-linked terminal galactosyl residues from gangliosides, glycoproteins, and glycosaminoglycans. In Aspergillus niger (strain ATCC MYA-4892 / CBS 513.88 / FGSC A1513), this protein is Probable beta-galactosidase C (lacC).